Reading from the N-terminus, the 109-residue chain is Large ribosomal subunit protein uL22 (109 aa).

Belongs to the universal ribosomal protein uL22 family. Part of the 50S ribosomal subunit.

Functionally, this protein binds specifically to 23S rRNA; its binding is stimulated by other ribosomal proteins, e.g. L4, L17, and L20. It is important during the early stages of 50S assembly. It makes multiple contacts with different domains of the 23S rRNA in the assembled 50S subunit and ribosome. Its function is as follows. The globular domain of the protein is located near the polypeptide exit tunnel on the outside of the subunit, while an extended beta-hairpin is found that lines the wall of the exit tunnel in the center of the 70S ribosome. This chain is Large ribosomal subunit protein uL22, found in Polynucleobacter asymbioticus (strain DSM 18221 / CIP 109841 / QLW-P1DMWA-1) (Polynucleobacter necessarius subsp. asymbioticus).